The chain runs to 700 residues: Polyphosphate kinase (700 aa).

An ATP-binding site is contributed by N45. Mg(2+)-binding residues include R373 and R403. In terms of domain architecture, PLD phosphodiesterase 1 spans 428 to 462 (PGMKIHAKLLLITRREEQGFVRYAHIGTGNFHERT). H433 functions as the Phosphohistidine intermediate in the catalytic mechanism. Positions 466, 562, and 590 each coordinate ATP. Residues 585-615 (DRFLEHPRVLVVHNDGDPQVFISSADWMERN) enclose the PLD phosphodiesterase 2 domain.

The protein belongs to the polyphosphate kinase 1 (PPK1) family. It depends on Mg(2+) as a cofactor. An intermediate of this reaction is the autophosphorylated ppk in which a phosphate is covalently linked to a histidine residue through a N-P bond.

The catalysed reaction is [phosphate](n) + ATP = [phosphate](n+1) + ADP. In terms of biological role, catalyzes the reversible transfer of the terminal phosphate of ATP to form a long-chain polyphosphate (polyP). The protein is Polyphosphate kinase of Vibrio vulnificus (strain CMCP6).